Reading from the N-terminus, the 913-residue chain is WD repeat-containing protein 44 (913 aa).

Positions 1–14 (MASESDTEEFYDAP) are enriched in acidic residues. The interval 1–24 (MASESDTEEFYDAPEDVHLGGGYP) is disordered. Ala-2 bears the N-acetylalanine mark. Residues 2-170 (ASESDTEEFY…SSTEQLNVLE (169 aa)) form a binding activity region. Ser-3 carries the post-translational modification Phosphoserine. Residues 9–15 (EFYDAPE) carry the FFAT-like motif motif. At Tyr-11 the chain carries Phosphotyrosine. A phosphoserine mark is found at Ser-27, Ser-50, Ser-66, Ser-71, Ser-81, Ser-96, and Ser-126. A coiled-coil region spans residues 119–184 (EESQKAESQN…VLNKEAVEVK (66 aa)). Phosphothreonine is present on residues Thr-158 and Thr-219. Positions 205-348 (AVEEVAPAKP…RPRSNSGREL (144 aa)) are disordered. The interval 211–257 (PAKPPRHLTPEPDIVASTKKPVPARPPPPTNFPPPRPPPPSRPAPPP) is important for interaction with ARHGAP26 AND ARHGAP10. Residues 233 to 256 (PARPPPPTNFPPPRPPPPSRPAPP) show a composition bias toward pro residues. Residue Ser-262 is modified to Phosphoserine. Positions 262–278 (SELEFETLKTPDIDVPK) are enriched in basic and acidic residues. At Thr-271 the chain carries Phosphothreonine. Over residues 280–311 (NITSDSLLTASMASESTVKDSQPSLDLASATS) the composition is skewed to polar residues. The segment at 334–347 (VMGPQRPRSNSGRE) is important for interaction with RAB11A. Ser-342 and Ser-344 each carry phosphoserine; by PKB/AKT1. Thr-349 bears the Phosphothreonine mark. Disordered regions lie at residues 397-424 (SNDAAQSDDEEKLQSQPTDTDGGRLKQK) and 459-480 (DEVFHTDQDDPSSSDDEGMPYT). A phosphoserine mark is found at Ser-403, Ser-470, Ser-471, and Ser-472. Acidic residues predominate over residues 467-476 (DDPSSSDDEG). The residue at position 479 (Tyr-479) is a Phosphotyrosine. Residues 509–548 (EHMGAVWTMKFSHCGRLLASAGQDNVVRIWALKNAFDYFN) form a WD 1 repeat. Residues 557–593 (EGRVSPSPSQESLSSSKSDTDTGVCSGTDEDPDDKNA) form a disordered region. Phosphoserine is present on residues Ser-561 and Ser-565. Low complexity predominate over residues 561 to 573 (SPSPSQESLSSSK). 6 WD repeats span residues 605–643 (GHTADLLDLSWSKNYFLLSSSMDKTVRLWHISRRECLCC), 645–685 (QHID…VALW), 690–729 (GQTKLITAANFCQNGKYAVIGTYDGRCIFYDTEHLKYHTQ), 740–779 (KVGRKITGIEPLPGENKILVTSNDSRIRLYDLRDLSLSMK), 784–823 (VNSSSQIKASFSHDFTYLVSGSEDKYVYIWSTYHDLSKFT), and 876–913 (VLDATPSGIMKTDNTEVLLSADFTGAIKVFVNKRKNVS).

Interacts with the GTP-bound form of RAB11A and RAB11B. Interacts with GRAF1/ARHGAP26 or GRAF2/ARHGAP10; the interaction connects the endoplasmic reticulum (ER) with the endosomal tubule. Interacts (via FFAT-like motif) with VAPA (via MSP domain) or VAPB (via MSP domain); the interaction connects the ER with the endosomal tubule. Does not bind to RAB7, RAB10, RAB14, RAB35 and RAB8A. Post-translationally, phosphorylated by ATK1; the phosphorylation stabilizes its interaction with RAB11A and RAB11B.

It localises to the cytoplasm. It is found in the cytosol. The protein resides in the perinuclear region. Its subcellular location is the endosome membrane. The protein localises to the golgi apparatus. It localises to the trans-Golgi network. Functionally, downstream effector for Rab11 which regulates Rab11 intracellular membrane trafficking functions such as endocytic recycling, intracellular ciliogenesis and protein export. ATK1-mediated phosphorylation of WDR44 induces binding to Rab11 which activates endocytic recycling of transferrin receptor back to the plasma membrane. When bound to Rab11, prevents the formation of the ciliogenic Rab11-Rabin8/RAB3IP-RAB11FIP3 complex, therefore inhibiting preciliary trafficking and ciliogenesis. Participates in neo-synthesized protein export by connecting the endoplasmic reticulum (ER) with the endosomal tubule via direct interactions with the integral ER proteins VAPA or VAPB and the endosomal protein GRAFs (GRAF1/ARHGAP26 or GRAF2/ARHGAP10), which facilitates the transfer of proteins such as E-cadherin, MPP14 and CFTR into a Rab8-Rab10-Rab11-dependent export route. The polypeptide is WD repeat-containing protein 44 (Homo sapiens (Human)).